We begin with the raw amino-acid sequence, 164 residues long: S-ribosylhomocysteine lyase (164 aa).

Fe cation contacts are provided by H61, H65, and C131.

It belongs to the LuxS family. In terms of assembly, homodimer. Requires Fe cation as cofactor.

The enzyme catalyses S-(5-deoxy-D-ribos-5-yl)-L-homocysteine = (S)-4,5-dihydroxypentane-2,3-dione + L-homocysteine. Functionally, involved in the synthesis of autoinducer 2 (AI-2) which is secreted by bacteria and is used to communicate both the cell density and the metabolic potential of the environment. The regulation of gene expression in response to changes in cell density is called quorum sensing. Catalyzes the transformation of S-ribosylhomocysteine (RHC) to homocysteine (HC) and 4,5-dihydroxy-2,3-pentadione (DPD). The protein is S-ribosylhomocysteine lyase of Bifidobacterium longum (strain NCC 2705).